The sequence spans 562 residues: Sulfite reductase [NADPH] hemoprotein beta-component (562 aa).

4 residues coordinate [4Fe-4S] cluster: C425, C431, C470, and C474. Siroheme is bound at residue C474.

The protein belongs to the nitrite and sulfite reductase 4Fe-4S domain family. In terms of assembly, alpha(8)-beta(8). The alpha component is a flavoprotein, the beta component is a hemoprotein. The cofactor is siroheme. [4Fe-4S] cluster is required as a cofactor.

It catalyses the reaction hydrogen sulfide + 3 NADP(+) + 3 H2O = sulfite + 3 NADPH + 4 H(+). The protein operates within sulfur metabolism; hydrogen sulfide biosynthesis; hydrogen sulfide from sulfite (NADPH route): step 1/1. Component of the sulfite reductase complex that catalyzes the 6-electron reduction of sulfite to sulfide. This is one of several activities required for the biosynthesis of L-cysteine from sulfate. This is Sulfite reductase [NADPH] hemoprotein beta-component from Tolumonas auensis (strain DSM 9187 / NBRC 110442 / TA 4).